Consider the following 178-residue polypeptide: Aspartate carbamoyltransferase regulatory chain (178 aa).

Over residues 1–15 (MNDREPNQKESKESV) the composition is skewed to basic and acidic residues. Residues 1 to 23 (MNDREPNQKESKESVNDAVPRAR) are disordered. Positions 133, 138, 159, and 162 each coordinate Zn(2+).

It belongs to the PyrI family. As to quaternary structure, contains catalytic and regulatory chains. It depends on Zn(2+) as a cofactor.

Its function is as follows. Involved in allosteric regulation of aspartate carbamoyltransferase. The sequence is that of Aspartate carbamoyltransferase regulatory chain from Haloquadratum walsbyi (strain DSM 16790 / HBSQ001).